Consider the following 1006-residue polypeptide: Probable beta-galactosidase A (1006 aa).

The N-terminal stretch at 1–18 (MKLLSVCAIALLAAQAAG) is a signal peptide. Substrate contacts are provided by Tyr-96, Asn-140, Ala-141, and Glu-142. N-linked (GlcNAc...) asparagine glycosylation is present at Asn-156. Asn-199 contributes to the substrate binding site. Residue Glu-200 is the Proton donor of the active site. Cys-205 and Cys-206 are disulfide-bonded. A substrate-binding site is contributed by Tyr-260. A disulfide bridge connects residues Cys-266 and Cys-315. Residue Glu-298 is the Nucleophile of the active site. Tyr-364 lines the substrate pocket. N-linked (GlcNAc...) asparagine glycosylation is found at Asn-373, Asn-402, Asn-422, Asn-622, Asn-760, Asn-777, and Asn-914.

The protein belongs to the glycosyl hydrolase 35 family.

It localises to the secreted. It catalyses the reaction Hydrolysis of terminal non-reducing beta-D-galactose residues in beta-D-galactosides.. In terms of biological role, cleaves beta-linked terminal galactosyl residues from gangliosides, glycoproteins, and glycosaminoglycans. The chain is Probable beta-galactosidase A (lacA) from Aspergillus fumigatus (strain CBS 144.89 / FGSC A1163 / CEA10) (Neosartorya fumigata).